A 159-amino-acid chain; its full sequence is Transcriptional repressor NrdR (159 aa).

Residues 3–34 (CPFCRHDDTQVVDSRVSEDGAAIRRRRRCSAC) fold into a zinc finger. Positions 49–139 (PAVVKKDGSR…VYRRFEDVSE (91 aa)) constitute an ATP-cone domain.

Belongs to the NrdR family. The cofactor is Zn(2+).

Negatively regulates transcription of bacterial ribonucleotide reductase nrd genes and operons by binding to NrdR-boxes. The polypeptide is Transcriptional repressor NrdR (Burkholderia cenocepacia (strain HI2424)).